A 267-amino-acid polypeptide reads, in one-letter code: NAD kinase 2 (267 aa).

The active-site Proton acceptor is D52. NAD(+) contacts are provided by residues 52-53 (DG), 124-125 (NE), R151, D153, 164-169 (TGYNKS), and A188.

The protein belongs to the NAD kinase family. A divalent metal cation serves as cofactor.

It localises to the cytoplasm. The enzyme catalyses NAD(+) + ATP = ADP + NADP(+) + H(+). Its function is as follows. Involved in the regulation of the intracellular balance of NAD and NADP, and is a key enzyme in the biosynthesis of NADP. Catalyzes specifically the phosphorylation on 2'-hydroxyl of the adenosine moiety of NAD to yield NADP. This chain is NAD kinase 2, found in Geobacillus kaustophilus (strain HTA426).